Here is a 105-residue protein sequence, read N- to C-terminus: Nucleoid-associated protein RPE_4812 (105 aa).

Belongs to the YbaB/EbfC family. As to quaternary structure, homodimer.

The protein resides in the cytoplasm. Its subcellular location is the nucleoid. Functionally, binds to DNA and alters its conformation. May be involved in regulation of gene expression, nucleoid organization and DNA protection. The polypeptide is Nucleoid-associated protein RPE_4812 (Rhodopseudomonas palustris (strain BisA53)).